The sequence spans 567 residues: Urease subunit alpha (567 aa).

The Urease domain occupies 129-567 (GGIDAHIHFI…LPLAQRYFLF (439 aa)). Residues histidine 134, histidine 136, and lysine 217 each coordinate Ni(2+). Lysine 217 carries the N6-carboxylysine modification. Histidine 219 is a substrate binding site. Ni(2+) contacts are provided by histidine 246 and histidine 272. Histidine 320 (proton donor) is an active-site residue. Aspartate 360 serves as a coordination point for Ni(2+).

It belongs to the metallo-dependent hydrolases superfamily. Urease alpha subunit family. Heterotrimer of UreA (gamma), UreB (beta) and UreC (alpha) subunits. Three heterotrimers associate to form the active enzyme. Ni cation serves as cofactor. In terms of processing, carboxylation allows a single lysine to coordinate two nickel ions.

The protein resides in the cytoplasm. The enzyme catalyses urea + 2 H2O + H(+) = hydrogencarbonate + 2 NH4(+). The protein operates within nitrogen metabolism; urea degradation; CO(2) and NH(3) from urea (urease route): step 1/1. In Hahella chejuensis (strain KCTC 2396), this protein is Urease subunit alpha.